The chain runs to 131 residues: Class I hydrophobin 9 (131 aa).

The N-terminal stretch at 1 to 23 is a signal peptide; the sequence is MFARRAISIFAFMLVALSIFAAA. Intrachain disulfides connect Cys-52-Cys-112, Cys-59-Cys-106, Cys-60-Cys-93, and Cys-113-Cys-126. N-linked (GlcNAc...) asparagine glycosylation is present at Asn-53. Residue Asn-115 is glycosylated (N-linked (GlcNAc...) asparagine).

It belongs to the fungal hydrophobin family. Self-assembles to form functional amyloid fibrils called rodlets. Self-assembly into fibrillar rodlets occurs spontaneously at hydrophobic:hydrophilic interfaces and the rodlets further associate laterally to form amphipathic monolayers.

It is found in the secreted. Its subcellular location is the cell wall. Functionally, aerial growth, conidiation, and dispersal of filamentous fungi in the environment rely upon a capability of their secreting small amphipathic proteins called hydrophobins (HPBs) with low sequence identity. Class I can self-assemble into an outermost layer of rodlet bundles on aerial cell surfaces, conferring cellular hydrophobicity that supports fungal growth, development and dispersal; whereas Class II form highly ordered films at water-air interfaces through intermolecular interactions but contribute nothing to the rodlet structure. The polypeptide is Class I hydrophobin 9 (Flammulina velutipes (Agaricus velutipes)).